The chain runs to 413 residues: GTPase HflX (413 aa).

One can recognise a Hflx-type G domain in the interval 200–386 (VRVALVGYTN…KVYETVREIH (187 aa)). GTP contacts are provided by residues 206-213 (GYTNVGKS), 231-235 (FATLD), 252-255 (DTVG), 318-321 (NKID), and 364-366 (SAT). Ser213 and Thr233 together coordinate Mg(2+).

This sequence belongs to the TRAFAC class OBG-HflX-like GTPase superfamily. HflX GTPase family. Monomer. Associates with the 50S ribosomal subunit. Mg(2+) serves as cofactor.

The protein resides in the cytoplasm. Functionally, GTPase that associates with the 50S ribosomal subunit and may have a role during protein synthesis or ribosome biogenesis. This chain is GTPase HflX, found in Flavobacterium psychrophilum (strain ATCC 49511 / DSM 21280 / CIP 103535 / JIP02/86).